The primary structure comprises 279 residues: GDSRRPIWNIAHMVNDLDLVDEYLDDGANSLELDVEFSKSGTALRTYHGVPCDCFRSCTRSEKFSKYLDYIRQLTTPGNSKFRSRLILLVLDLKLNPLSSSAAYNAGADVARNLLDNYWQRGDSKARAYIVLSLETIAGAEFITGFKDTMKKEGFDEKYYDKIGWDFSGNEDLGKIRDVLESHGIREHIWQGDGITNCLPRDDNRLKQAISRRYSPTYVYADKVYTWSIDKESSIENALRLGVDGVMTNYPARVISVLGEREFSGKLRLATYDDNPWEK.

Histidine 12 is an active-site residue. Residues glutamate 32 and aspartate 34 each coordinate Mg(2+). Histidine 48 acts as the Nucleophile in catalysis. Cystine bridges form between cysteine 52–cysteine 58 and cysteine 54–cysteine 198. Aspartate 92 serves as a coordination point for Mg(2+).

The protein belongs to the arthropod phospholipase D family. Class II subfamily. Class IIb sub-subfamily. The cofactor is Mg(2+). In terms of tissue distribution, expressed by the venom gland.

It localises to the secreted. It catalyses the reaction an N-(acyl)-sphingosylphosphocholine = an N-(acyl)-sphingosyl-1,3-cyclic phosphate + choline. It carries out the reaction N-hexanoyl-sphing-4-enine-1-phosphocholine = N-(hexanoyl)-sphing-4-enine-1,3-cyclic phosphate + choline. The catalysed reaction is an N-(acyl)-sphingosylphosphoethanolamine = an N-(acyl)-sphingosyl-1,3-cyclic phosphate + ethanolamine. The enzyme catalyses N-dodecanoyl-heptadecasphing-4-enine-1-phosphoethanolamine = N-dodecanoyl-heptadecasphing-4-enine-1,3-cyclic phosphate + ethanolamine. It catalyses the reaction a 1-acyl-sn-glycero-3-phosphoethanolamine = a 1-acyl-sn-glycero-2,3-cyclic phosphate + ethanolamine. It carries out the reaction 1-tetradecanoyl-sn-glycero-3-phosphoethanolamine = 1-tetradecanoyl-sn-glycero-2,3-cyclic phosphate + ethanolamine. Its function is as follows. Dermonecrotic toxins cleave the phosphodiester linkage between the phosphate and headgroup of certain phospholipids (sphingolipid and lysolipid substrates), forming an alcohol (often choline) and a cyclic phosphate. This toxin acts on lysophosphatidylethanolamine (LPE) and ceramide phosphoethanolamine (CPE) with high activity. This toxin acts on sphingomyelin (SM) with very low activity and is not active on lysophosphatidylserine (LPS), lysophosphatidylcholine (LPC) and lysophosphatidylglycerol (LPG). It acts by transphosphatidylation, releasing exclusively cyclic phosphate as second products. It is not surprising that spider toxins have affinity for ethanolamine-containing sphingolipids since they are common in insect prey. Induces dermonecrosis, hemolysis, increased vascular permeability, edema, inflammatory response, and platelet aggregation. The sequence is that of Dermonecrotic toxin StSicTox-betaIB1i from Sicarius terrosus (Cave spider).